The chain runs to 147 residues: D-aminoacyl-tRNA deacylase (147 aa).

A Gly-cisPro motif, important for rejection of L-amino acids motif is present at residues 136–137 (GP).

Belongs to the DTD family. Homodimer.

It is found in the cytoplasm. The catalysed reaction is glycyl-tRNA(Ala) + H2O = tRNA(Ala) + glycine + H(+). It carries out the reaction a D-aminoacyl-tRNA + H2O = a tRNA + a D-alpha-amino acid + H(+). An aminoacyl-tRNA editing enzyme that deacylates mischarged D-aminoacyl-tRNAs. Also deacylates mischarged glycyl-tRNA(Ala), protecting cells against glycine mischarging by AlaRS. Acts via tRNA-based rather than protein-based catalysis; rejects L-amino acids rather than detecting D-amino acids in the active site. By recycling D-aminoacyl-tRNA to D-amino acids and free tRNA molecules, this enzyme counteracts the toxicity associated with the formation of D-aminoacyl-tRNA entities in vivo and helps enforce protein L-homochirality. The protein is D-aminoacyl-tRNA deacylase of Streptococcus agalactiae serotype Ia (strain ATCC 27591 / A909 / CDC SS700).